The primary structure comprises 430 residues: Tol-Pal system protein TolB (430 aa).

The first 26 residues, Met1 to Ala26, serve as a signal peptide directing secretion.

Belongs to the TolB family. In terms of assembly, the Tol-Pal system is composed of five core proteins: the inner membrane proteins TolA, TolQ and TolR, the periplasmic protein TolB and the outer membrane protein Pal. They form a network linking the inner and outer membranes and the peptidoglycan layer.

Its subcellular location is the periplasm. Its function is as follows. Part of the Tol-Pal system, which plays a role in outer membrane invagination during cell division and is important for maintaining outer membrane integrity. The chain is Tol-Pal system protein TolB from Paraburkholderia phymatum (strain DSM 17167 / CIP 108236 / LMG 21445 / STM815) (Burkholderia phymatum).